We begin with the raw amino-acid sequence, 173 residues long: Small ribosomal subunit protein uS5 (173 aa).

The S5 DRBM domain maps to 17 to 80 (LREKMIAVNR…EESRRNMIKV (64 aa)).

Belongs to the universal ribosomal protein uS5 family. In terms of assembly, part of the 30S ribosomal subunit. Contacts proteins S4 and S8.

Its function is as follows. With S4 and S12 plays an important role in translational accuracy. In terms of biological role, located at the back of the 30S subunit body where it stabilizes the conformation of the head with respect to the body. This Delftia acidovorans (strain DSM 14801 / SPH-1) protein is Small ribosomal subunit protein uS5.